We begin with the raw amino-acid sequence, 492 residues long: Transcription factor IIIB 60 kDa subunit (492 aa).

The segment at Met1–Glu30 adopts a TFIIB-type zinc-finger fold. Zn(2+) contacts are provided by Cys3, Cys6, Cys22, and Cys25. The disordered stretch occupies residues Gln440–Met468.

This sequence belongs to the TFIIB family. In terms of assembly, TFIIIB comprises the TATA-binding protein (TBP), the B-related factor (BRF) and a third subunit (Potential). Interacts with maf1.

It localises to the nucleus. General activator of RNA polymerase III transcription. This chain is Transcription factor IIIB 60 kDa subunit (brf1), found in Schizosaccharomyces pombe (strain 972 / ATCC 24843) (Fission yeast).